The sequence spans 568 residues: AT-rich interactive domain-containing protein 3B (568 aa).

Met1 carries the post-translational modification N-acetylmethionine. A compositionally biased stretch (low complexity) spans 1–22; it reads MEPLQQQQQQQQQKQPQQPLLQ. The tract at residues 1-174 is disordered; the sequence is MEPLQQQQQQ…SVPTAGQPSW (174 aa). Ser87 is subject to Phosphoserine. Residues 88–107 show a composition bias toward acidic residues; that stretch reads EPEEEEGGLEDEDGDDDVAE. A compositionally biased stretch (basic and acidic residues) spans 151–160; that stretch reads TKEDHTKDAS. An interaction with RB1 region spans residues 201–374; it reads SRDFAKLYEL…SSPKIRFSIL (174 aa). One can recognise an ARID domain in the interval 213 to 305; the sequence is DPERKEFLDD…YLYAYECEKK (93 aa). The residue at position 309 (Ser309) is a Phosphoserine. The residue at position 370 (Arg370) is an Asymmetric dimethylarginine. Positions 378–403 are disordered; that stretch reads SSSGTSASSPRIPPASTLRKGDGVPV. The 98-residue stretch at 425–522 folds into the REKLES domain; sequence GPLEHLRERL…GVLFAQKPVV (98 aa). Residues 495–518 are interaction with ARID3A; it reads SNIGSINMSVDIDGTTYTGVLFAQ. Low complexity predominate over residues 529–559; the sequence is TPQSIGSSASSSNSSSSHCSPSPTSSRGTPS. Residues 529-568 are disordered; that stretch reads TPQSIGSSASSSNSSSSHCSPSPTSSRGTPSAEPSTSWSL.

In terms of assembly, heterodimer with ARID3A. Interacts with unphosphorylated RB1. As to expression, expressed at high levels in testis. Also expressed in prostate, thyroid and thymus.

The protein resides in the nucleus. Transcription factor involved in the production of cranial mesenchymal tissues. Favors nuclear targeting of ARID3A. This Mus musculus (Mouse) protein is AT-rich interactive domain-containing protein 3B (Arid3b).